The primary structure comprises 424 residues: Histidine--tRNA ligase (424 aa).

Belongs to the class-II aminoacyl-tRNA synthetase family. As to quaternary structure, homodimer.

The protein resides in the cytoplasm. The enzyme catalyses tRNA(His) + L-histidine + ATP = L-histidyl-tRNA(His) + AMP + diphosphate + H(+). The sequence is that of Histidine--tRNA ligase from Bacillus velezensis (strain DSM 23117 / BGSC 10A6 / LMG 26770 / FZB42) (Bacillus amyloliquefaciens subsp. plantarum).